A 547-amino-acid chain; its full sequence is GMP synthase [glutamine-hydrolyzing] (547 aa).

Residues 12-210 (KILILDFGSQ…VLDIAGAKPD (199 aa)) enclose the Glutamine amidotransferase type-1 domain. The active-site Nucleophile is Cys89. Active-site residues include His184 and Glu186. In terms of domain architecture, GMPS ATP-PPase spans 211-403 (WIMRDHIEEA…LGLPAEMVYR (193 aa)). 238-244 (SGGVDSS) is a binding site for ATP.

In terms of assembly, homodimer.

It catalyses the reaction XMP + L-glutamine + ATP + H2O = GMP + L-glutamate + AMP + diphosphate + 2 H(+). The protein operates within purine metabolism; GMP biosynthesis; GMP from XMP (L-Gln route): step 1/1. In terms of biological role, catalyzes the synthesis of GMP from XMP. The protein is GMP synthase [glutamine-hydrolyzing] of Burkholderia pseudomallei (strain 1710b).